A 51-amino-acid polypeptide reads, in one-letter code: Large ribosomal subunit protein eL39 (51 aa).

It belongs to the eukaryotic ribosomal protein eL39 family. Part of the 50S ribosomal subunit.

The sequence is that of Large ribosomal subunit protein eL39 from Thermococcus kodakarensis (strain ATCC BAA-918 / JCM 12380 / KOD1) (Pyrococcus kodakaraensis (strain KOD1)).